The chain runs to 288 residues: Store-operated calcium entry regulator STIMATE (288 aa).

The Cytoplasmic portion of the chain corresponds to 1–28 (MQGPGGNVSRGLPGGPASTVASGAGRCE). Helical transmembrane passes span 29–49 (SGALMHSFGIFLQGLLGVVAF), 69–89 (IWFLDTSKQAIGMLFIHFANV), and 102–122 (LYLINFLLDATVGMLLIYVGV). Positions 149–153 (GAWVG) match the GXXXG motif motif. The next 2 helical transmembrane spans lie at 156–176 (ALYIVIMIFEKSVVFIVLLIL) and 194–214 (LAIVMLIVPFFVNAFMFWVVD). Residues 215 to 288 (NFLMRKGKTK…KKKHRFGLPV (74 aa)) lie on the Cytoplasmic side of the membrane. The segment at 228–288 (EERGANQDSR…KKKHRFGLPV (61 aa)) is disordered. The interval 241–246 (KVRYRR) is required for localization in the endoplasmic reticulum. The span at 261 to 272 (ADDEMEESDAEE) shows a compositional bias: acidic residues. The span at 277–288 (PVKKKHRFGLPV) shows a compositional bias: basic residues.

The protein belongs to the STIMATE family. Homooligomer. Interacts with STIM1.

Its subcellular location is the endoplasmic reticulum membrane. Its function is as follows. Acts as a regulator of store-operated Ca(2+) entry (SOCE) at junctional sites that connect the endoplasmic reticulum (ER) and plasma membrane (PM), called ER-plasma membrane (ER-PM) junction or cortical ER. SOCE is a Ca(2+) influx following depletion of intracellular Ca(2+) stores. Acts by interacting with STIM1, promoting STIM1 conformational switch. Involved in STIM1 relocalization to ER-PM junctions. Contributes to the maintenance and reorganization of store-dependent ER-PM junctions. This is Store-operated calcium entry regulator STIMATE from Rattus norvegicus (Rat).